The following is a 96-amino-acid chain: Protein RnfH (96 aa).

It belongs to the UPF0125 (RnfH) family.

The protein is Protein RnfH of Pectobacterium carotovorum subsp. carotovorum (strain PC1).